The sequence spans 353 residues: Photosystem II protein D1 (353 aa).

N-acetylthreonine is present on Thr2. A Phosphothreonine modification is found at Thr2. The next 3 membrane-spanning stretches (helical) occupy residues Tyr29–Ser46, His118–Leu133, and Trp142–Ala156. Position 118 (His118) interacts with chlorophyll a. Residue Tyr126 coordinates pheophytin a. Residues Asp170 and Glu189 each coordinate [CaMn4O5] cluster. Residues Phe197–Leu218 traverse the membrane as a helical segment. His198 lines the chlorophyll a pocket. A quinone is bound by residues His215 and Ser264–Phe265. A Fe cation-binding site is contributed by His215. His272 serves as a coordination point for Fe cation. A helical membrane pass occupies residues Phe274–Leu288. [CaMn4O5] cluster is bound by residues His332, Glu333, Asp342, and Ala344. A propeptide spanning residues Ala345–Ala353 is cleaved from the precursor.

It belongs to the reaction center PufL/M/PsbA/D family. In terms of assembly, PSII is composed of 1 copy each of membrane proteins PsbA, PsbB, PsbC, PsbD, PsbE, PsbF, PsbH, PsbI, PsbJ, PsbK, PsbL, PsbM, PsbT, PsbX, PsbY, PsbZ, Psb30/Ycf12, at least 3 peripheral proteins of the oxygen-evolving complex and a large number of cofactors. It forms dimeric complexes. The cofactor is The D1/D2 heterodimer binds P680, chlorophylls that are the primary electron donor of PSII, and subsequent electron acceptors. It shares a non-heme iron and each subunit binds pheophytin, quinone, additional chlorophylls, carotenoids and lipids. D1 provides most of the ligands for the Mn4-Ca-O5 cluster of the oxygen-evolving complex (OEC). There is also a Cl(-1) ion associated with D1 and D2, which is required for oxygen evolution. The PSII complex binds additional chlorophylls, carotenoids and specific lipids.. Post-translationally, tyr-161 forms a radical intermediate that is referred to as redox-active TyrZ, YZ or Y-Z. C-terminally processed by CTPA; processing is essential to allow assembly of the oxygen-evolving complex and thus photosynthetic growth.

Its subcellular location is the plastid. It is found in the chloroplast thylakoid membrane. It catalyses the reaction 2 a plastoquinone + 4 hnu + 2 H2O = 2 a plastoquinol + O2. Photosystem II (PSII) is a light-driven water:plastoquinone oxidoreductase that uses light energy to abstract electrons from H(2)O, generating O(2) and a proton gradient subsequently used for ATP formation. It consists of a core antenna complex that captures photons, and an electron transfer chain that converts photonic excitation into a charge separation. The D1/D2 (PsbA/PsbD) reaction center heterodimer binds P680, the primary electron donor of PSII as well as several subsequent electron acceptors. The chain is Photosystem II protein D1 from Chlamydomonas moewusii (Chlamydomonas eugametos).